The primary structure comprises 232 residues: Large ribosomal subunit protein uL1 (232 aa).

This sequence belongs to the universal ribosomal protein uL1 family. In terms of assembly, part of the 50S ribosomal subunit.

Its function is as follows. Binds directly to 23S rRNA. The L1 stalk is quite mobile in the ribosome, and is involved in E site tRNA release. Protein L1 is also a translational repressor protein, it controls the translation of the L11 operon by binding to its mRNA. The protein is Large ribosomal subunit protein uL1 of Alkaliphilus oremlandii (strain OhILAs) (Clostridium oremlandii (strain OhILAs)).